The sequence spans 241 residues: Glutathione S-transferase omega-1 (241 aa).

Ser-2 is modified (N-acetylserine). The GST N-terminal domain occupies 22 to 101; the sequence is GLIRVYSMRF…YLDEAYPGKK (80 aa). The active-site Nucleophile is Cys-32. An N6-acetyllysine modification is found at Lys-57. Glutathione contacts are provided by residues Lys-59, Val-72, and 85–86; that span reads ES. Positions 106-225 constitute a GST C-terminal domain; sequence DPYEKACQKM…HIEPRDLRAF (120 aa). An N6-acetyllysine mark is found at Lys-143, Lys-148, and Lys-152.

As to quaternary structure, homodimer. Most abundant in the liver and skeletal muscle; also expressed in heart, diaphragm, colon, thymus, kidney, lung, ovaries, spleen, intestine and pancreas.

It localises to the cytoplasm. It is found in the cytosol. It catalyses the reaction RX + glutathione = an S-substituted glutathione + a halide anion + H(+). The enzyme catalyses L-dehydroascorbate + 2 glutathione = glutathione disulfide + L-ascorbate. It carries out the reaction methylarsonate + 2 glutathione + H(+) = methylarsonous acid + glutathione disulfide + H2O. Exhibits glutathione-dependent thiol transferase and dehydroascorbate reductase activities. Has S-(phenacyl)glutathione reductase activity. Also has glutathione S-transferase activity. Participates in the biotransformation of inorganic arsenic and reduces monomethylarsonic acid (MMA) and dimethylarsonic acid. This Sus scrofa (Pig) protein is Glutathione S-transferase omega-1 (GSTO1).